A 1393-amino-acid chain; its full sequence is DNA-directed RNA polymerase subunit beta'' (1393 aa).

Zn(2+) is bound by residues Cys-220, Cys-291, Cys-298, and Cys-301.

Belongs to the RNA polymerase beta' chain family. RpoC2 subfamily. As to quaternary structure, in plastids the minimal PEP RNA polymerase catalytic core is composed of four subunits: alpha, beta, beta', and beta''. When a (nuclear-encoded) sigma factor is associated with the core the holoenzyme is formed, which can initiate transcription. Zn(2+) is required as a cofactor.

Its subcellular location is the plastid. It localises to the chloroplast. The catalysed reaction is RNA(n) + a ribonucleoside 5'-triphosphate = RNA(n+1) + diphosphate. In terms of biological role, DNA-dependent RNA polymerase catalyzes the transcription of DNA into RNA using the four ribonucleoside triphosphates as substrates. The protein is DNA-directed RNA polymerase subunit beta'' of Gossypium hirsutum (Upland cotton).